Here is a 138-residue protein sequence, read N- to C-terminus: ATP synthase epsilon chain (138 aa).

Belongs to the ATPase epsilon chain family. As to quaternary structure, F-type ATPases have 2 components, CF(1) - the catalytic core - and CF(0) - the membrane proton channel. CF(1) has five subunits: alpha(3), beta(3), gamma(1), delta(1), epsilon(1). CF(0) has three main subunits: a, b and c.

It localises to the cell membrane. Its function is as follows. Produces ATP from ADP in the presence of a proton gradient across the membrane. This is ATP synthase epsilon chain from Streptococcus equi subsp. equi (strain 4047).